Reading from the N-terminus, the 230-residue chain is UPF0758 protein plu4865 (230 aa).

In terms of domain architecture, MPN spans 108-230; sequence IMSSPSVTQE…CVSFAERGWI (123 aa). Zn(2+)-binding residues include His-179, His-181, and Asp-192. The JAMM motif signature appears at 179–192; the sequence is HNHPSGHAEPSLAD.

The protein belongs to the UPF0758 family. YicR subfamily.

In Photorhabdus laumondii subsp. laumondii (strain DSM 15139 / CIP 105565 / TT01) (Photorhabdus luminescens subsp. laumondii), this protein is UPF0758 protein plu4865.